The chain runs to 487 residues: Serralysin (487 aa).

The propeptide occupies 1 to 16 (MQSTKKAIEITESNFA). Zn(2+) is bound at residue His-192. Glu-193 is an active-site residue. Positions 196, 202, and 232 each coordinate Zn(2+). Residues Arg-269, Gly-271, Thr-273, Asp-301, Gly-303, Gly-304, Asp-306, Thr-343, Glu-345, Gly-350, Gly-352, Asp-354, Asn-359, Ala-361, Asn-363, Gly-367, Gly-368, Ala-369, Asp-372, Gly-376, Gly-377, Gly-378, Gly-379, Asp-381, Gly-385, Gly-386, Ala-387, Gly-388, Asp-390, Asp-399, Asp-406, and Asp-416 each coordinate Ca(2+). 2 Hemolysin-type calcium-binding repeats span residues 348-365 (IGGS…NNVL) and 366-383 (KGGA…ADEL).

It belongs to the peptidase M10B family. Ca(2+) serves as cofactor. The cofactor is Zn(2+).

The protein resides in the secreted. The catalysed reaction is Preferential cleavage of bonds with hydrophobic residues in P1'.. Naturally present in the silkworm intestine and allows the emerging moth to dissolve its cocoon. The sequence is that of Serralysin from Serratia marcescens (strain ATCC 21074 / E-15).